A 489-amino-acid chain; its full sequence is MYKFSAIEIRDQFIRGDVSASAITQHYLNRIAKYDQKIGAFLSVYEEQAMMQAKQLDQKRLANQPLGKLAGIPIAIKDNILVKGEISTCGSKFLTNFKSPYQASVIEYLLAEGAVIIGKTNMDEFAMGSSTENSALQKTSNPWNLKCTPGGSSGGSAAAVAGRLSPLSLGSDTGGSVRLPASFCGVVGFKPTYGRVSRFGLVAYGSSLDQIGPLATNTADTALLMEVIGRHCPKDSTSIALGPEDYLSQFKDSIAGMKIGVPWEFLENLADEPKKIFQQSVNLMKQLGAEIVDIDLSILKYSLAVYYILATAEASTNLARFDGIRYGQRSPKAKTLEEVYDFSKEEGFGAEVKRRILLGTYVLSAGYQDAYYKKAQKVRTLILRSYKEAFAKCDLIASPVSPFAAFEIGAIKDPLQMYLEDIYTIGINLAGLPAVSIPNGFSKDGKPMGLQLIGAQKHDREVLNAAHILEKSLAFHPAIPELVKEETSA.

Residues Lys77 and Ser152 each act as charge relay system in the active site. Ser176 serves as the catalytic Acyl-ester intermediate.

It belongs to the amidase family. GatA subfamily. Heterotrimer of A, B and C subunits.

The catalysed reaction is L-glutamyl-tRNA(Gln) + L-glutamine + ATP + H2O = L-glutaminyl-tRNA(Gln) + L-glutamate + ADP + phosphate + H(+). Its function is as follows. Allows the formation of correctly charged Gln-tRNA(Gln) through the transamidation of misacylated Glu-tRNA(Gln) in organisms which lack glutaminyl-tRNA synthetase. The reaction takes place in the presence of glutamine and ATP through an activated gamma-phospho-Glu-tRNA(Gln). This chain is Glutamyl-tRNA(Gln) amidotransferase subunit A, found in Protochlamydia amoebophila (strain UWE25).